Consider the following 279-residue polypeptide: Putative pyruvate, phosphate dikinase regulatory protein (279 aa).

157-164 (GVSRTSKT) is an ADP binding site.

Belongs to the pyruvate, phosphate/water dikinase regulatory protein family. PDRP subfamily.

It catalyses the reaction N(tele)-phospho-L-histidyl/L-threonyl-[pyruvate, phosphate dikinase] + ADP = N(tele)-phospho-L-histidyl/O-phospho-L-threonyl-[pyruvate, phosphate dikinase] + AMP + H(+). It carries out the reaction N(tele)-phospho-L-histidyl/O-phospho-L-threonyl-[pyruvate, phosphate dikinase] + phosphate + H(+) = N(tele)-phospho-L-histidyl/L-threonyl-[pyruvate, phosphate dikinase] + diphosphate. Bifunctional serine/threonine kinase and phosphorylase involved in the regulation of the pyruvate, phosphate dikinase (PPDK) by catalyzing its phosphorylation/dephosphorylation. This chain is Putative pyruvate, phosphate dikinase regulatory protein, found in Lactobacillus helveticus (strain DPC 4571).